The primary structure comprises 34 residues: Mytilin-A (34 aa).

Intrachain disulfides connect Cys2-Cys27, Cys6-Cys29, Cys10-Cys31, and Cys15-Cys34.

The protein localises to the secreted. Functionally, has antibacterial activity against A.viridans, B.megaterium, M.luteus, E.faecalis, S.aureus and E.coli. It is active against the marine species A.carrageenovora, P.alginovora and C.drobachiensis. This is Mytilin-A from Mytilus edulis (Blue mussel).